The sequence spans 175 residues: NADH-ubiquinone oxidoreductase chain 6 (175 aa).

5 helical membrane passes run 1–21 (MMYMVFLLSVAFVISFIGFSS), 26–46 (IYGGLGLIVGGGVGCGIVMGL), 47–67 (GGSFLGLMVFLVYLGGMLVVF), 87–107 (VILSALFVGLLVEVAMIVWMI), and 152–172 (WLVILAGWSLFVSIFIVIEIT).

Belongs to the complex I subunit 6 family.

It localises to the mitochondrion membrane. It carries out the reaction a ubiquinone + NADH + 5 H(+)(in) = a ubiquinol + NAD(+) + 4 H(+)(out). Its function is as follows. Core subunit of the mitochondrial membrane respiratory chain NADH dehydrogenase (Complex I) that is believed to belong to the minimal assembly required for catalysis. Complex I functions in the transfer of electrons from NADH to the respiratory chain. The immediate electron acceptor for the enzyme is believed to be ubiquinone. This chain is NADH-ubiquinone oxidoreductase chain 6 (MT-ND6), found in Dasypus novemcinctus (Nine-banded armadillo).